The following is a 533-amino-acid chain: Zona pellucida sperm-binding protein 3 receptor (533 aa).

Positions 1 to 28 (MFPRLQAVSAPALLQITLMAVLLAPVLG) are cleaved as a signal peptide. Sushi domains lie at 29–88 (DCGP…FCAK), 89–150 (KRCR…ECVI), 151–215 (VKCD…TCEK), 216–275 (VICR…TCEP), 276–342 (NGCI…GCER), 343–408 (VCCP…ACES), and 409–467 (AVCL…KCEW). 14 cysteine pairs are disulfide-bonded: Cys-30/Cys-74, Cys-60/Cys-86, Cys-91/Cys-132, Cys-118/Cys-148, Cys-153/Cys-196, Cys-182/Cys-213, Cys-218/Cys-260, Cys-246/Cys-273, Cys-278/Cys-328, Cys-312/Cys-340, Cys-345/Cys-393, Cys-378/Cys-406, Cys-411/Cys-452, and Cys-438/Cys-465. N-linked (GlcNAc...) asparagine glycans are attached at residues Asn-68 and Asn-77. Asn-185, Asn-191, and Asn-200 each carry an N-linked (GlcNAc...) asparagine glycan. 2 N-linked (GlcNAc...) asparagine glycosylation sites follow: Asn-433 and Asn-455.

Homooligomer; disulfide-linked. May contain 6-8 monomers per oligomer. The N-terminus may be blocked. Testis. Not expressed in heart, brain, liver or kidney.

The protein resides in the cytoplasmic vesicle. The protein localises to the secretory vesicle. It localises to the acrosome lumen. Probably involved in the formation of the dense core and M1 domain of the acrosome. May also regulate the release of certain secretory proteins following the acrosomal reaction. This is Zona pellucida sperm-binding protein 3 receptor (ZP3R) from Cavia porcellus (Guinea pig).